The following is a 121-amino-acid chain: MSDIIREIEREYMRSDIPAFRPGDTVRVNVKVVEGNRERIQAFEGVVIKRQGSGINETFTVRRVSYGVGVERTFPVHSPRLASIEVIRRGVVRRAKLYYLRERTGKAARIRERRLARPEEA.

It belongs to the bacterial ribosomal protein bL19 family.

Functionally, this protein is located at the 30S-50S ribosomal subunit interface and may play a role in the structure and function of the aminoacyl-tRNA binding site. The sequence is that of Large ribosomal subunit protein bL19 from Symbiobacterium thermophilum (strain DSM 24528 / JCM 14929 / IAM 14863 / T).